Consider the following 400-residue polypeptide: NADH-quinone oxidoreductase subunit D (400 aa).

This sequence belongs to the complex I 49 kDa subunit family. NDH-1 is composed of 14 different subunits. Subunits NuoB, C, D, E, F, and G constitute the peripheral sector of the complex.

It is found in the cell inner membrane. It catalyses the reaction a quinone + NADH + 5 H(+)(in) = a quinol + NAD(+) + 4 H(+)(out). In terms of biological role, NDH-1 shuttles electrons from NADH, via FMN and iron-sulfur (Fe-S) centers, to quinones in the respiratory chain. The immediate electron acceptor for the enzyme in this species is believed to be a menaquinone. Couples the redox reaction to proton translocation (for every two electrons transferred, four hydrogen ions are translocated across the cytoplasmic membrane), and thus conserves the redox energy in a proton gradient. The polypeptide is NADH-quinone oxidoreductase subunit D (Chlorobaculum parvum (strain DSM 263 / NCIMB 8327) (Chlorobium vibrioforme subsp. thiosulfatophilum)).